A 499-amino-acid polypeptide reads, in one-letter code: Putative antiporter subunit mnhD2 (499 aa).

14 helical membrane passes run 1-21 (MSNL…ILVF), 31-51 (ILSI…LIYV), 77-97 (LSLL…AYGF), 107-127 (FHLP…FLTS), 129-149 (LFNL…LVTL), 160-180 (IVYV…IGML), 208-228 (ISLV…FMWL), 239-259 (LAAL…IRFF), 272-292 (TLLV…VIAY), 307-327 (IGFI…GAIF), 329-349 (LAND…LVYM), 367-387 (FFGV…PFSG), 402-422 (GNYI…YSLF), and 449-469 (GLLS…PVVL).

This sequence belongs to the CPA3 antiporters (TC 2.A.63) subunit D family. In terms of assembly, may form a heterooligomeric complex that consists of seven subunits: mnhA2, mnhB2, mnhC2, mnhD2, mnhE2, mnhF2 and mnhG2.

The protein resides in the cell membrane. This is Putative antiporter subunit mnhD2 (mnhD2) from Staphylococcus epidermidis (strain ATCC 35984 / DSM 28319 / BCRC 17069 / CCUG 31568 / BM 3577 / RP62A).